A 315-amino-acid polypeptide reads, in one-letter code: Neuroguidin (315 aa).

The residue at position 2 (alanine 2) is an N-acetylalanine. Residues 5-42 (EVLESDLPNAVALLKNLQEQVMAVTAQVQTLTKKVQAK) are a coiled coil. The tract at residues 41-174 (AKAYPTEKGL…KGTAKKYVPP (134 aa)) is necessary for interaction with EIF4E. Residues serine 121, serine 142, and serine 143 each carry the phosphoserine modification. Residues 123–174 (SENDPLRFKPHPSNMMSKLSSEDEEEDEAEEGQSGASGKKSGKGTAKKYVPP) form a disordered region. The span at 144–153 (EDEEEDEAEE) shows a compositional bias: acidic residues. Residues 181-205 (YDETEAEREKKRLERAKRRALSSSV) adopt a coiled-coil conformation. Phosphoserine is present on residues serine 204 and serine 214. A disordered region spans residues 252–315 (SKREKGRRKR…RKKKGFRRRR (64 aa)). Over residues 264–276 (VMSSQLHSLTHFS) the composition is skewed to polar residues. Positions 295-315 (TKKRKKIPKKGRKKKGFRRRR) are enriched in basic residues.

It belongs to the SAS10 family. In terms of assembly, part of the small subunit (SSU) processome, composed of more than 70 proteins and the RNA chaperone small nucleolar RNA (snoRNA) U3. Interacts with CPEB1 and EIF4E.

The protein localises to the nucleus. It is found in the nucleolus. The protein resides in the chromosome. It localises to the centromere. Its subcellular location is the cytoplasm. The protein localises to the cell projection. It is found in the axon. The protein resides in the dendrite. It localises to the filopodium. Part of the small subunit (SSU) processome, first precursor of the small eukaryotic ribosomal subunit. During the assembly of the SSU processome in the nucleolus, many ribosome biogenesis factors, an RNA chaperone and ribosomal proteins associate with the nascent pre-rRNA and work in concert to generate RNA folding, modifications, rearrangements and cleavage as well as targeted degradation of pre-ribosomal RNA by the RNA exosome. Its dissociation from the complex determines the transition from state pre-A1 to state pre-A1*. Inhibits mRNA translation in a cytoplasmic polyadenylation element (CPE)-dependent manner. The protein is Neuroguidin (NGDN) of Bos taurus (Bovine).